A 299-amino-acid polypeptide reads, in one-letter code: Small ribosomal subunit protein uS2 (299 aa).

Residues 259-291 are compositionally biased toward low complexity; the sequence is AAASAAGPTSWEADGADWAASSAPAAAGESWAE. Positions 259–299 are disordered; sequence AAASAAGPTSWEADGADWAASSAPAAAGESWAETQPAEGKW.

Belongs to the universal ribosomal protein uS2 family. In terms of assembly, component of the small ribosomal subunit. Mature ribosomes consist of a small (40S) and a large (60S) subunit. The 40S subunit contains about 33 different proteins and 1 molecule of RNA (18S). The 60S subunit contains about 49 different proteins and 3 molecules of RNA (25S, 5.8S and 5S). Interacts with rps21.

The protein resides in the cytoplasm. Functionally, required for the assembly and/or stability of the 40S ribosomal subunit. Required for the processing of the 20S rRNA-precursor to mature 18S rRNA in a late step of the maturation of 40S ribosomal subunits. This Aspergillus flavus (strain ATCC 200026 / FGSC A1120 / IAM 13836 / NRRL 3357 / JCM 12722 / SRRC 167) protein is Small ribosomal subunit protein uS2 (rps0).